The following is a 45-amino-acid chain: Photosystem II reaction center protein K (45 aa).

The propeptide occupies 1–8 (MEAALLLA). Residues 24–44 (LPVIPVFFLLLAFVWQAAVGF) traverse the membrane as a helical segment.

This sequence belongs to the PsbK family. PSII is composed of 1 copy each of membrane proteins PsbA, PsbB, PsbC, PsbD, PsbE, PsbF, PsbH, PsbI, PsbJ, PsbK, PsbL, PsbM, PsbT, PsbX, PsbY, PsbZ, Psb30/Ycf12, peripheral proteins PsbO, CyanoQ (PsbQ), PsbU, PsbV and a large number of cofactors. It forms dimeric complexes.

It is found in the cellular thylakoid membrane. Its function is as follows. One of the components of the core complex of photosystem II (PSII). PSII is a light-driven water:plastoquinone oxidoreductase that uses light energy to abstract electrons from H(2)O, generating O(2) and a proton gradient subsequently used for ATP formation. It consists of a core antenna complex that captures photons, and an electron transfer chain that converts photonic excitation into a charge separation. The chain is Photosystem II reaction center protein K from Synechococcus elongatus (strain ATCC 33912 / PCC 7942 / FACHB-805) (Anacystis nidulans R2).